A 378-amino-acid chain; its full sequence is Dihydroorotate dehydrogenase (quinone) (378 aa).

FMN is bound by residues 79-83 (PGYDK) and Thr-103. Lys-83 serves as a coordination point for substrate. Residue 128-132 (NRMGF) participates in substrate binding. 2 residues coordinate FMN: Asn-160 and Asn-193. Asn-193 contacts substrate. Ser-196 (nucleophile) is an active-site residue. Asn-198 is a binding site for substrate. Residues Lys-231 and Thr-259 each contribute to the FMN site. 260-261 (NT) provides a ligand contact to substrate. FMN is bound by residues Gly-289, Gly-318, and 339-340 (YT).

It belongs to the dihydroorotate dehydrogenase family. Type 2 subfamily. In terms of assembly, monomer. It depends on FMN as a cofactor.

It is found in the cell membrane. The enzyme catalyses (S)-dihydroorotate + a quinone = orotate + a quinol. It participates in pyrimidine metabolism; UMP biosynthesis via de novo pathway; orotate from (S)-dihydroorotate (quinone route): step 1/1. Catalyzes the conversion of dihydroorotate to orotate with quinone as electron acceptor. The sequence is that of Dihydroorotate dehydrogenase (quinone) from Trichodesmium erythraeum (strain IMS101).